The following is an 802-amino-acid chain: Copper-exporting P-type ATPase (802 aa).

HMA domains lie at 5 to 70 (KKTT…YGVA) and 72 to 138 (ETVE…YDAS). Cu(+) contacts are provided by Cys-16, Cys-19, Cys-83, and Cys-86. Helical transmembrane passes span 161-181 (LIIS…HLFN), 192-212 (WFQF…FYVG), 224-244 (MDVL…YEMV), 256-276 (LYFE…YLEA), 411-431 (YFVP…ITLV), and 438-458 (PALV…LGLA). The active-site 4-aspartylphosphate intermediate is Asp-495. Mg(2+) is bound by residues Asp-690 and Asp-694. The next 2 helical transmembrane spans lie at 748–767 (LFWA…LGLL) and 771–790 (VAGA…ALRL).

The protein belongs to the cation transport ATPase (P-type) (TC 3.A.3) family. Type IB subfamily.

It is found in the cell membrane. The catalysed reaction is Cu(+)(in) + ATP + H2O = Cu(+)(out) + ADP + phosphate + H(+). Its function is as follows. Involved in copper export. The sequence is that of Copper-exporting P-type ATPase (copA) from Staphylococcus aureus (strain COL).